The chain runs to 489 residues: MVALVNNMRKITIPSVGGKLVSSGQFQNFIASCILFCCPGIYLAVTGLGAGGGHPDAYHMADVTNSLLYALFTVCGWAGGPILKYLGPRWALALGATGYPIYIGGLWYFDNTGKQGFTIFTGAYEGIAAGLLWASTAYISLSYSCANQKSQFIATQWTILAFGSTVGSFIAFGINYHSTSTGVPMAVYIIFIIIMACAVLLAILFIKSPSDVRKSDGTSALSPSNKTFGQELWGLFEAAKDWRLLCLLPASFASQSTIAWQSHLNSYYFSLRTRSLNNVLFWVIQFFVPYLFTLILDAKALKRRTRGIIGLTIQAVVIMATLSGELGWIVSKHIDLHDTSPDLDWTQRGYGGALVLYLLMGIQYGSSIVSVQWCISLLSSDPDKYARYAGLYKGTQAAGMCVSFGIDAAGVSFLGQGIIYFIFLFVMCASQLIMTSIFGKETDRLSTKEHFTDDKSYIDGVMPSTDTYMNEKTSDELDKKSLPSDQVYV.

11 consecutive transmembrane segments (helical) span residues 29-49, 67-87, 90-110, 119-139, 152-172, 186-206, 276-296, 308-328, 351-371, 397-417, and 418-438; these read FIASCILFCCPGIYLAVTGLG, LLYALFTVCGWAGGPILKYLG, WALALGATGYPIYIGGLWYFD, IFTGAYEGIAAGLLWASTAYI, FIATQWTILAFGSTVGSFIAF, AVYIIFIIIMACAVLLAILFI, LNNVLFWVIQFFVPYLFTLIL, IIGLTIQAVVIMATLSGELGW, GGALVLYLLMGIQYGSSIVSV, AAGMCVSFGIDAAGVSFLGQG, and IIYFIFLFVMCASQLIMTSIF.

It is found in the membrane. This is an uncharacterized protein from Schizosaccharomyces pombe (strain 972 / ATCC 24843) (Fission yeast).